Reading from the N-terminus, the 549-residue chain is Cytoplasmic trehalase (549 aa).

Residues R168, 175–176 (WD), N212, 221–223 (RSQ), 292–294 (RDE), and G324 each bind substrate. Active-site proton donor/acceptor residues include D326 and E509. Position 525 (E525) interacts with substrate.

The protein belongs to the glycosyl hydrolase 37 family. In terms of assembly, monomer.

Its subcellular location is the cytoplasm. It catalyses the reaction alpha,alpha-trehalose + H2O = alpha-D-glucose + beta-D-glucose. Its pathway is glycan degradation; trehalose degradation; D-glucose from alpha,alpha-trehalose: step 1/1. Its function is as follows. Hydrolyzes trehalose to glucose. Could be involved, in cells returning to low osmolarity conditions, in the utilization of the accumulated cytoplasmic trehalose, which was synthesized in response to high osmolarity. The polypeptide is Cytoplasmic trehalase (Escherichia coli (strain 55989 / EAEC)).